We begin with the raw amino-acid sequence, 279 residues long: Large ribosomal subunit protein uL2 (279 aa).

2 stretches are compositionally biased toward basic residues: residues 211–221 and 256–279; these read GRSRWRGKTPH and SYGK…RKGK. A disordered region spans residues 211 to 279; sequence GRSRWRGKTP…KFIVRGRKGK (69 aa).

Belongs to the universal ribosomal protein uL2 family. Part of the 50S ribosomal subunit. Forms a bridge to the 30S subunit in the 70S ribosome.

Its function is as follows. One of the primary rRNA binding proteins. Required for association of the 30S and 50S subunits to form the 70S ribosome, for tRNA binding and peptide bond formation. It has been suggested to have peptidyltransferase activity; this is somewhat controversial. Makes several contacts with the 16S rRNA in the 70S ribosome. The chain is Large ribosomal subunit protein uL2 from Oenococcus oeni (strain ATCC BAA-331 / PSU-1).